The primary structure comprises 1342 residues: DNA-directed RNA polymerase subunit beta (1342 aa).

Belongs to the RNA polymerase beta chain family. In terms of assembly, the RNAP catalytic core consists of 2 alpha, 1 beta, 1 beta' and 1 omega subunit. When a sigma factor is associated with the core the holoenzyme is formed, which can initiate transcription.

It catalyses the reaction RNA(n) + a ribonucleoside 5'-triphosphate = RNA(n+1) + diphosphate. DNA-dependent RNA polymerase catalyzes the transcription of DNA into RNA using the four ribonucleoside triphosphates as substrates. In Blochmanniella floridana, this protein is DNA-directed RNA polymerase subunit beta.